Here is a 203-residue protein sequence, read N- to C-terminus: LexA repressor (203 aa).

Positions 29-49 (VREIGQEVGLSSSSTVHGYLK) form a DNA-binding region, H-T-H motif. Catalysis depends on for autocatalytic cleavage activity residues S126 and K163.

Belongs to the peptidase S24 family. In terms of assembly, homodimer.

The enzyme catalyses Hydrolysis of Ala-|-Gly bond in repressor LexA.. In terms of biological role, represses a number of genes involved in the response to DNA damage (SOS response), including recA and lexA. In the presence of single-stranded DNA, RecA interacts with LexA causing an autocatalytic cleavage which disrupts the DNA-binding part of LexA, leading to derepression of the SOS regulon and eventually DNA repair. The polypeptide is LexA repressor (Pelotomaculum thermopropionicum (strain DSM 13744 / JCM 10971 / SI)).